Here is a 475-residue protein sequence, read N- to C-terminus: ISWI one complex protein 4 (475 aa).

S2 is modified (phosphoserine). Residue T9 is modified to Phosphothreonine. Disordered regions lie at residues 42–84 (VSVH…DFGE), 181–296 (EEEY…IKYH), and 454–475 (EMDR…KVGA). Residues S65 and S73 each carry the phosphoserine modification. Composition is skewed to acidic residues over residues 72 to 84 (QSEE…DFGE), 181 to 193 (EEEY…EENE), and 241 to 252 (ASEEEEEEEEEK). Phosphoserine is present on S242. Residues 259 to 294 (KRPQRTKTKKVVVSKTKPNPKTKAKKEKPKPPKPIK) are compositionally biased toward basic residues. The span at 456 to 475 (DREKPSFSEDVKEEESKVGA) shows a compositional bias: basic and acidic residues.

Component of the ISW1B complex, which at least consists of ISW1, IOC2 and IOC4.

Its subcellular location is the nucleus. In terms of biological role, functions as a component of the ISW1B complex, which acts in remodeling the chromatin by catalyzing an ATP-dependent alteration in the structure of nucleosomal DNA. The ISW1B complex acts within coding regions to control the amount of RNA polymerase II released into productive elongation and to coordinate elongation with termination and pre-mRNA processing. This Saccharomyces cerevisiae (strain ATCC 204508 / S288c) (Baker's yeast) protein is ISWI one complex protein 4 (IOC4).